The chain runs to 869 residues: MTDAPAERPDPSVAGDADWAAQARPLLVHADMRLRKRFDQGEPIERLVALRARAVDQLMRNAWTRCIPADSGLSLHAVGGYGRGELFPRSDVDVLVLGDSVAQQRHEQHLSRLFALLWDVGLPISHAVRSPTQCMVAAADQTVLTALIESRALVADAAARAALAAAIAPQRVWPPRDFFQAKREELLARHQRFGDTADNLEPDIKDGPGGLRDLQTLGCMALRAFGVKDVEALVGLGHVGCDEAAALRREREELARLRFGLHIVANRPEERLRFDYQKTLAERLGFADDLESLGVEKMMQRFYRSAALIRRISDRLLQRFEEQFDGEATPESLGGGFSLRRGYLAADSDSWPGDDVLQVFALFVHWAAHREVRGLHSLTARALAEVLREFPAYDVADATARELFMALLRGTRAVETLNRMARLGVLGQWIPAFASVSGRMQFDLFHVYTVDQHTLMVLRNIALFAAGRADERFSIAHEVWPRLRKPELLLLAGLFHDIAKGRGGDHSELGAVDTRAFCLAHRLSEGDTELVTWLVEQHLRMSVTAQKQDISDPEVIHRFATLVGTRERLDYLYLLTCADIAGTSPKLWNAWKDRLLADLYFAARRALREGVEHPPPREERLREARESARALMQAQGHDDATIDRQFAGMPDENFLRFRPEQLAWQAASLIEVEIAQTLVKARRAVPDNDALEVFVYSPDRDGLFAAIVATLDRKGYGIHRARVLDAPHDAIFDVFEVLPRDTYADGDPQRLAATLRQVLAGDLQQVRPARRAVPGQLRHFRFAPRVEFSESADGRRTRISLVAPDRPGLLADVAHVLRVQHLRVHDARIATFGERAEDQFQITDEHDRPLSESARQALRDALCACLDPV.

A uridylyltransferase region spans residues 1–332; that stretch reads MTDAPAERPD…QFDGEATPES (332 aa). The tract at residues 333–691 is uridylyl-removing; that stretch reads LGGGFSLRRG…RRAVPDNDAL (359 aa). The 123-residue stretch at 450-572 folds into the HD domain; the sequence is VDQHTLMVLR…VGTRERLDYL (123 aa). ACT domains follow at residues 692–774 and 798–869; these read EVFV…RAVP and RISL…LDPV.

Belongs to the GlnD family. The cofactor is Mg(2+).

The enzyme catalyses [protein-PII]-L-tyrosine + UTP = [protein-PII]-uridylyl-L-tyrosine + diphosphate. It carries out the reaction [protein-PII]-uridylyl-L-tyrosine + H2O = [protein-PII]-L-tyrosine + UMP + H(+). Its activity is regulated as follows. Uridylyltransferase (UTase) activity is inhibited by glutamine, while glutamine activates uridylyl-removing (UR) activity. Modifies, by uridylylation and deuridylylation, the PII regulatory proteins (GlnB and homologs), in response to the nitrogen status of the cell that GlnD senses through the glutamine level. Under low glutamine levels, catalyzes the conversion of the PII proteins and UTP to PII-UMP and PPi, while under higher glutamine levels, GlnD hydrolyzes PII-UMP to PII and UMP (deuridylylation). Thus, controls uridylylation state and activity of the PII proteins, and plays an important role in the regulation of nitrogen assimilation and metabolism. This chain is Bifunctional uridylyltransferase/uridylyl-removing enzyme, found in Xanthomonas oryzae pv. oryzae (strain MAFF 311018).